The sequence spans 158 residues: MSKFPMTVQGARALEEEVKHLKGVLRPQISQAIAEARELGDLKENAEYHAAREQQGMVEARIRDIEAKLSNAQVIDVTAIPHSGKVIFGTTVDIANVETDETVTYQIVGDDEADIKGGKISVNSPIARALIGKTEGDAVLVRTPGGDVEYEIVEVRHI.

Residues 53-73 (EQQGMVEARIRDIEAKLSNAQ) are a coiled coil.

This sequence belongs to the GreA/GreB family.

Functionally, necessary for efficient RNA polymerase transcription elongation past template-encoded arresting sites. The arresting sites in DNA have the property of trapping a certain fraction of elongating RNA polymerases that pass through, resulting in locked ternary complexes. Cleavage of the nascent transcript by cleavage factors such as GreA or GreB allows the resumption of elongation from the new 3'terminus. GreA releases sequences of 2 to 3 nucleotides. In Pseudomonas aeruginosa (strain ATCC 15692 / DSM 22644 / CIP 104116 / JCM 14847 / LMG 12228 / 1C / PRS 101 / PAO1), this protein is Transcription elongation factor GreA.